The following is a 119-amino-acid chain: Large ribosomal subunit protein uL18 (119 aa).

Residues 1 to 20 (MISKPDKNKTRQKRHTRVRG) are disordered. Residues 10–20 (TRQKRHTRVRG) show a composition bias toward basic residues.

Belongs to the universal ribosomal protein uL18 family. In terms of assembly, part of the 50S ribosomal subunit; part of the 5S rRNA/L5/L18/L25 subcomplex. Contacts the 5S and 23S rRNAs.

This is one of the proteins that bind and probably mediate the attachment of the 5S RNA into the large ribosomal subunit, where it forms part of the central protuberance. The polypeptide is Large ribosomal subunit protein uL18 (Latilactobacillus sakei subsp. sakei (strain 23K) (Lactobacillus sakei subsp. sakei)).